The following is a 394-amino-acid chain: Major outer membrane porin, serovar B (394 aa).

A signal peptide spans 1–22; it reads MKKLLKSVLVFAALSSASSLQA.

Belongs to the chlamydial porin (CP) (TC 1.B.2) family. As to quaternary structure, part of a disulfide cross-linked outer membrane complex (COMC) composed of the major outer membrane porin (MOMP), the small cysteine-rich protein (OmcA) and the large cysteine-rich periplasmic protein (OmcB).

Its subcellular location is the cell outer membrane. In elementary bodies (EBs, the infectious stage, which is able to survive outside the host cell) provides the structural integrity of the outer envelope through disulfide cross-links with the small cysteine-rich protein and the large cysteine-rich periplasmic protein. It has been described in publications as the Sarkosyl-insoluble COMC (Chlamydia outer membrane complex), and serves as the functional equivalent of peptidoglycan. In terms of biological role, permits diffusion of specific solutes through the outer membrane. In Chlamydia trachomatis, this protein is Major outer membrane porin, serovar B (ompA).